The sequence spans 334 residues: Putative binding protein YtlA (334 aa).

The N-terminal stretch at 1–23 is a signal peptide; that stretch reads MNRWLRLGFACVGSIFLMFALAA. Cysteine 24 is lipidated: N-palmitoyl cysteine. Cysteine 24 carries the S-diacylglycerol cysteine lipid modification.

This sequence belongs to the bacterial solute-binding protein SsuA/TauA family.

Its subcellular location is the cell membrane. This chain is Putative binding protein YtlA (ytlA), found in Bacillus subtilis (strain 168).